Consider the following 1673-residue polypeptide: Leucine-rich repeat- and IQ domain-containing protein 1 (1673 aa).

Disordered stretches follow at residues 22–48 (ISISSLENDEVENDSVSDTQSDSSDTD) and 189–208 (LEEKDKETLEAQNEREKRTF). An LRR 1 repeat occupies 34–59 (NDSVSDTQSDSSDTDLLELPESVLHY). Residues 216 to 239 (QCWMRQFEVEKKHLEDLQKQDQDK) form an LRR 2 repeat. Residues 291–320 (RYDAAVKIQATYRASVTYRKYSPIIKEQME) form the IQ 1 domain. Residues 324 to 374 (RRAQELKEKEAKIRQKEEEKRRRLEEEQRVEEEKKKKMLEERRRREREYEE) are disordered. A compositionally biased stretch (basic and acidic residues) spans 326 to 374 (AQELKEKEAKIRQKEEEKRRRLEEEQRVEEEKKKKMLEERRRREREYEE). One copy of the LRR 3 repeat lies at 491–516 (LPKLKINENLSKNQCSEQPSDQEFNA). Disordered regions lie at residues 544-658 (ESDT…EEIP) and 679-702 (EGEADLQDSASGKLAPSEEAGSHS). 2 stretches are compositionally biased toward basic and acidic residues: residues 549-567 (TEEHVEHVREEKVGQETEK) and 588-602 (EETREGLAEEIEIKE). A compositionally biased stretch (polar residues) spans 603–629 (MTQQGGPSDENNSSPISMQKSLPSLTP). One copy of the LRR 4 repeat lies at 641-665 (LEEDQETDLKSERIEEIPEEGVLSC). Over residues 647-656 (TDLKSERIEE) the composition is skewed to basic and acidic residues. LRR repeat units lie at residues 830 to 852 (CSNLQILSLRRCGLTSLQGLSHC), 853 to 873 (TRLKYIDAQENHIEAISCENL), 874 to 894 (ENLSVVLLNNNLLTSIHGFDG), 895 to 919 (CTNLQSLELSHNKITRISGLESLKY), 921 to 939 (QELTVDHNQLISTKGLCEA), 940 to 961 (PTIVYLDCSHNHLTGIDGIGNC), 962 to 983 (GLLQIIKLQGNYLREPPSLRNH), 984 to 1005 (VLLRELHLDDNSISSVEGLSSC), 1007 to 1029 (LPLLQYLSISQNSLATIVPLFHL), 1030 to 1054 (VSLEKLDVSNNCLSDLTNVMCWFNA), and 1067 to 1090 (PVLQEINWRDSILKTLPALRVLNG). 2 disordered regions span residues 1163–1230 (AHEQ…HCEE) and 1308–1330 (PTTTEPLQDPLINNQTTSNEERR). 2 stretches are compositionally biased toward polar residues: residues 1168 to 1226 (DVNT…PSTS) and 1308 to 1325 (PTTTEPLQDPLINNQTTS). IQ domains follow at residues 1280 to 1309 (PTKAAMVIQAQWRSYIAHRQINCSAEMHPT) and 1340 to 1369 (REKAALHIQAVWKGFILRKKLATARKAIKD). Residues 1378–1405 (EIDLEDFEFDEDALEKDWPALDSTGFPS) form an LRR 16 repeat.

The chain is Leucine-rich repeat- and IQ domain-containing protein 1 (Lrriq1) from Mus musculus (Mouse).